The chain runs to 289 residues: Iodotyrosine deiodinase 1 (289 aa).

A helical membrane pass occupies residues 1–21; the sequence is MYFLTPILVAILCILVVWIFK. Residues 47–58 are compositionally biased toward basic and acidic residues; that stretch reads DLKDSSDLHQAE. The tract at residues 47 to 69 is disordered; that stretch reads DLKDSSDLHQAEEDADEWQESEE. Over residues 59–69 the composition is skewed to acidic residues; the sequence is EDADEWQESEE. Residues 100 to 104, Ser-128, and 128 to 129 contribute to the FMN site; these read RRSVR and SG. Residues Ala-130, Glu-157, Tyr-161, and Lys-182 each coordinate 3,5-diiodo-L-tyrosine. Residues Ala-130, Glu-157, Tyr-161, and Lys-182 each coordinate 3-iodo-L-tyrosine. FMN contacts are provided by residues 237–239 and Arg-279; that span reads TTT.

This sequence belongs to the nitroreductase family. As to quaternary structure, homodimer. FMN serves as cofactor.

It is found in the cell membrane. Its subcellular location is the cytoplasmic vesicle membrane. The catalysed reaction is 2 iodide + L-tyrosine + 2 NADP(+) = 3,5-diiodo-L-tyrosine + 2 NADPH + H(+). The enzyme catalyses iodide + L-tyrosine + NADP(+) = 3-iodo-L-tyrosine + NADPH. It catalyses the reaction 3-iodo-L-tyrosine + iodide + NADP(+) = 3,5-diiodo-L-tyrosine + NADPH + H(+). It carries out the reaction L-tyrosine + chloride + NADP(+) = 3-chloro-L-tyrosine + NADPH. The catalysed reaction is bromide + L-tyrosine + NADP(+) = 3-bromo-L-tyrosine + NADPH. Catalyzes the dehalogenation of halotyrosines such as 3-bromo-L-tyrosine, 3-chloro-L-tyrosine, 3-iodo-L-tyrosine and 3,5-diiodo-L-tyrosine. During thyroid hormone biosynthesis, facilitates iodide salvage by catalysing the oxidative NADPH-dependent deiodination of the halogenated by-products of thyroid hormone production, monoiodotyrosine (L-MIT) and diiodotyrosine (L-DIT). The scavanged iodide can then reenter the hormone-producing pathways. Acts more efficiently on 3-iodo-L-tyrosine than 3,5-diiodo-L-tyrosine. The sequence is that of Iodotyrosine deiodinase 1 (IYD) from Pongo abelii (Sumatran orangutan).